We begin with the raw amino-acid sequence, 980 residues long: Macrophage colony-stimulating factor 1 receptor (980 aa).

The first 19 residues, 1 to 19 (MGPRALLVLLVATAWHAQG), serve as a signal peptide directing secretion. Residues 20 to 514 (VPVIQPSGPE…QLPDELLFTP (495 aa)) lie on the Extracellular side of the membrane. Ig-like C2-type domains follow at residues 21–100 (PVIQ…IHLY), 107–197 (PWKV…KVQK), 202–297 (PATL…RVVE), 299–397 (AYLN…LTLR), and 400–499 (PEVR…WPIS). An intrachain disulfide couples C42 to C84. Residues N45, N73, N94, N153, N275, N286, N302, N335, N410, N477, and N490 are each glycosylated (N-linked (GlcNAc...) asparagine). 2 disulfides stabilise this stretch: C127-C177 and C224-C278. A disulfide bridge links C417 with C482. Residues 515-535 (VLLTCMSIMALLLLLLLLLLY) traverse the membrane as a helical segment. Topologically, residues 536-980 (KYKQKPKYQV…LLQPNNYQFC (445 aa)) are cytoplasmic. The tract at residues 539–571 (QKPKYQVRWKIIESYEGNSYTFIDPTQLPYNEK) is regulatory juxtamembrane domain. 2 positions are modified to phosphotyrosine; by autocatalysis: Y543 and Y558. Residues 579-908 (LQFGKTLGAG…PTFQQICSLL (330 aa)) enclose the Protein kinase domain. Residues 585-593 (LGAGAFGKV) and K613 each bind ATP. Residues Y696 and Y705 each carry the phosphotyrosine; by autocatalysis modification. S710 carries the post-translational modification Phosphoserine. Residue Y720 is modified to Phosphotyrosine; by autocatalysis. The tract at residues 723 to 743 (MRPVSTSSSNDSFSEEDLGKE) is disordered. D776 acts as the Proton acceptor in catalysis. The tract at residues 794 to 816 (DFGLARDIMNDSNYIVKGNARLP) is activation loop. Phosphotyrosine; by autocatalysis is present on residues Y807 and Y921. Positions 918 to 959 (VPNYTNLPSSSSSSSSSSSSCRTGSGGGSSSEPEEESSSEHL) are disordered. The span at 926 to 940 (SSSSSSSSSSSSCRT) shows a compositional bias: low complexity. At Y977 the chain carries Phosphotyrosine; by autocatalysis.

Belongs to the protein kinase superfamily. Tyr protein kinase family. CSF-1/PDGF receptor subfamily. As to quaternary structure, monomer. Homodimer. Interacts with CSF1 and IL34. Interaction with dimeric CSF1 or IL34 leads to receptor homodimerization. Interacts with INPPL1/SHIP2 and THOC5. Interacts (tyrosine phosphorylated) with PLCG2 (via SH2 domain). Interacts (tyrosine phosphorylated) with PIK3R1 (via SH2 domain). Interacts (tyrosine phosphorylated) with FYN, YES1 and SRC (via SH2 domain). Interacts (tyrosine phosphorylated) with CBL, GRB2 and SLA2. In terms of processing, autophosphorylated in response to CSF1 or IL34 binding. Phosphorylation at Tyr-558 is important for normal down-regulation of signaling by ubiquitination, internalization and degradation. Phosphorylation at Tyr-558 and Tyr-807 is important for interaction with SRC family members, including FYN, YES1 and SRC, and for subsequent activation of these protein kinases. Phosphorylation at Tyr-696 and Tyr-921 is important for interaction with GRB2. Phosphorylation at Tyr-720 is important for interaction with PIK3R1. Phosphorylation at Tyr-720 and Tyr-807 is important for interaction with PLCG2. Phosphorylation at Tyr-977 is important for interaction with CBL. Dephosphorylation by PTPN2 negatively regulates downstream signaling and macrophage differentiation. Ubiquitinated. Becomes rapidly polyubiquitinated after autophosphorylation, leading to its degradation.

Its subcellular location is the cell membrane. The catalysed reaction is L-tyrosyl-[protein] + ATP = O-phospho-L-tyrosyl-[protein] + ADP + H(+). With respect to regulation, present in an inactive conformation in the absence of bound ligand. CSF1 or IL34 binding leads to dimerization and activation by autophosphorylation on tyrosine residues. Its function is as follows. Tyrosine-protein kinase that acts as a cell-surface receptor for CSF1 and IL34 and plays an essential role in the regulation of survival, proliferation and differentiation of hematopoietic precursor cells, especially mononuclear phagocytes, such as macrophages and monocytes. Promotes the release of pro-inflammatory chemokines in response to IL34 and CSF1, and thereby plays an important role in innate immunity and in inflammatory processes. Plays an important role in the regulation of osteoclast proliferation and differentiation, the regulation of bone resorption, and is required for normal bone and tooth development. Required for normal male and female fertility, and for normal development of milk ducts and acinar structures in the mammary gland during pregnancy. Promotes reorganization of the actin cytoskeleton, regulates formation of membrane ruffles, cell adhesion and cell migration, and promotes cancer cell invasion. Activates several signaling pathways in response to ligand binding, including the ERK1/2 and the JNK pathway. Phosphorylates PIK3R1, PLCG2, GRB2, SLA2 and CBL. Activation of PLCG2 leads to the production of the cellular signaling molecules diacylglycerol and inositol 1,4,5-trisphosphate, that then lead to the activation of protein kinase C family members, especially PRKCD. Phosphorylation of PIK3R1, the regulatory subunit of phosphatidylinositol 3-kinase, leads to activation of the AKT1 signaling pathway. Activated CSF1R also mediates activation of the MAP kinases MAPK1/ERK2 and/or MAPK3/ERK1, and of the SRC family kinases SRC, FYN and YES1. Activated CSF1R transmits signals both via proteins that directly interact with phosphorylated tyrosine residues in its intracellular domain, or via adapter proteins, such as GRB2. Promotes activation of STAT family members STAT3, STAT5A and/or STAT5B. Promotes tyrosine phosphorylation of SHC1 and INPP5D/SHIP-1. Receptor signaling is down-regulated by protein phosphatases, such as INPP5D/SHIP-1, that dephosphorylate the receptor and its downstream effectors, and by rapid internalization of the activated receptor. In the central nervous system, may play a role in the development of microglia macrophages. The polypeptide is Macrophage colony-stimulating factor 1 receptor (CSF1R) (Felis catus (Cat)).